The sequence spans 340 residues: Small ribosomal subunit biogenesis GTPase RsgA (340 aa).

Residues 20–34 (ERAERAERRARRDDT) are compositionally biased toward basic and acidic residues. Positions 20–42 (ERAERAERRARRDDTSLDAGDYG) are disordered. The 159-residue stretch at 116 to 274 (RGQLKPVAAN…LIDSPGIREF (159 aa)) folds into the CP-type G domain. Residues 163-166 (NKTD) and 216-224 (GQSGVGKSS) contribute to the GTP site. 4 residues coordinate Zn(2+): Cys298, Cys303, His305, and Cys311.

The protein belongs to the TRAFAC class YlqF/YawG GTPase family. RsgA subfamily. Monomer. Associates with 30S ribosomal subunit, binds 16S rRNA. The cofactor is Zn(2+).

The protein resides in the cytoplasm. Functionally, one of several proteins that assist in the late maturation steps of the functional core of the 30S ribosomal subunit. Helps release RbfA from mature subunits. May play a role in the assembly of ribosomal proteins into the subunit. Circularly permuted GTPase that catalyzes slow GTP hydrolysis, GTPase activity is stimulated by the 30S ribosomal subunit. The chain is Small ribosomal subunit biogenesis GTPase RsgA from Chromohalobacter salexigens (strain ATCC BAA-138 / DSM 3043 / CIP 106854 / NCIMB 13768 / 1H11).